Here is a 398-residue protein sequence, read N- to C-terminus: 1-deoxy-D-xylulose 5-phosphate reductoisomerase (398 aa).

T10, G11, S12, I13, G36, R37, N38, and N124 together coordinate NADPH. Position 125 (K125) interacts with 1-deoxy-D-xylulose 5-phosphate. Residue E126 coordinates NADPH. D150 is a Mn(2+) binding site. 1-deoxy-D-xylulose 5-phosphate-binding residues include S151, E152, S186, and H209. A Mn(2+)-binding site is contributed by E152. Residue G215 participates in NADPH binding. Residues S222, N227, K228, and E231 each contribute to the 1-deoxy-D-xylulose 5-phosphate site. Position 231 (E231) interacts with Mn(2+).

The protein belongs to the DXR family. In terms of assembly, homodimer. The cofactor is Mg(2+). It depends on Mn(2+) as a cofactor.

It catalyses the reaction 2-C-methyl-D-erythritol 4-phosphate + NADP(+) = 1-deoxy-D-xylulose 5-phosphate + NADPH + H(+). Its pathway is isoprenoid biosynthesis; isopentenyl diphosphate biosynthesis via DXP pathway; isopentenyl diphosphate from 1-deoxy-D-xylulose 5-phosphate: step 1/6. Its function is as follows. Catalyzes the NADPH-dependent rearrangement and reduction of 1-deoxy-D-xylulose-5-phosphate (DXP) to 2-C-methyl-D-erythritol 4-phosphate (MEP). The sequence is that of 1-deoxy-D-xylulose 5-phosphate reductoisomerase from Yersinia enterocolitica serotype O:8 / biotype 1B (strain NCTC 13174 / 8081).